We begin with the raw amino-acid sequence, 62 residues long: Pro-MCH variant (62 aa).

The segment at 23-41 is NGE-like; it reads GSVAFPAENGVQDTESTQE. A disordered region spans residues 29–62; the sequence is AENGVQDTESTQEKRETGDEENSAKFPIGRRDFD. The tract at residues 44–56 is NEI-like; it reads ETGDEENSAKFPI. A melanin-concentrating hormone-like region spans residues 60–62; the sequence is DFD.

It belongs to the melanin-concentrating hormone family.

The sequence is that of Pro-MCH variant (PMCHL1) from Pan paniscus (Pygmy chimpanzee).